The primary structure comprises 622 residues: Basic helix-loop-helix ARNT-like protein 2 (622 aa).

The segment covering 1–10 has biased composition (low complexity); sequence MAEAGVGSAE. Disordered stretches follow at residues 1–29 and 41–86; these read MAEA…DGNS and PITK…EDEE. The segment covering 45–54 has biased composition (polar residues); that stretch reads PATTSFNNSV. The span at 67 to 76 shows a compositional bias: acidic residues; it reads DNQDTVEVDG. Over residues 77-86 the composition is skewed to basic and acidic residues; it reads DPQKRNEDEE. One can recognise a bHLH domain in the interval 92-145; sequence DFREAHSQTEKRRRDKMNNLIEELSAMIPQCNPMARKLDKLTVLRMAVQHLKSL. 2 PAS domains span residues 163 to 235 and 342 to 412; these read KDDE…DVSP and VPQK…LQNK. A PAC domain is found at 417-460; sequence TNSYKFRAKDGSFITLKSQWFSFMNPWTKELEYIVSNNTVVLGH.

In terms of assembly, component of the circadian core oscillator, which includes the CRY proteins, CLOCK, or NPAS2, BMAL1 or BMAL2, CSNK1D and/or CSNK1E, TIMELESS and the PER proteins. Interacts directly with CLOCK to form the BMAL2-CLOCK transactivator. Can form heterodimers or homodimers which interact directly with CLOCK to form the transcription activator. Expressed in the pineal gland.

The protein resides in the nucleus. In terms of biological role, transcriptional activator which forms a core component of the circadian clock. The circadian clock, an internal time-keeping system, regulates various physiological processes through the generation of approximately 24 hour circadian rhythms in gene expression, which are translated into rhythms in metabolism and behavior. It is derived from the Latin roots 'circa' (about) and 'diem' (day) and acts as an important regulator of a wide array of physiological functions including metabolism, sleep, body temperature, blood pressure, endocrine, immune, cardiovascular, and renal function. Consists of two major components: the central clock, residing in the suprachiasmatic nucleus (SCN) of the brain, and the peripheral clocks that are present in nearly every tissue and organ system. Both the central and peripheral clocks can be reset by environmental cues, also known as Zeitgebers (German for 'timegivers'). The predominant Zeitgeber for the central clock is light, which is sensed by retina and signals directly to the SCN. The central clock entrains the peripheral clocks through neuronal and hormonal signals, body temperature and feeding-related cues, aligning all clocks with the external light/dark cycle. Circadian rhythms allow an organism to achieve temporal homeostasis with its environment at the molecular level by regulating gene expression to create a peak of protein expression once every 24 hours to control when a particular physiological process is most active with respect to the solar day. Transcription and translation of core clock components (CLOCK, NPAS2, BMAL1, BMAL2, PER1, PER2, PER3, CRY1 and CRY2) plays a critical role in rhythm generation, whereas delays imposed by post-translational modifications (PTMs) are important for determining the period (tau) of the rhythms (tau refers to the period of a rhythm and is the length, in time, of one complete cycle). A diurnal rhythm is synchronized with the day/night cycle, while the ultradian and infradian rhythms have a period shorter and longer than 24 hours, respectively. Disruptions in the circadian rhythms contribute to the pathology of cardiovascular diseases, cancer, metabolic syndromes and aging. A transcription/translation feedback loop (TTFL) forms the core of the molecular circadian clock mechanism. Transcription factors, CLOCK or NPAS2 and BMAL1 or BMAL2, form the positive limb of the feedback loop, act in the form of a heterodimer and activate the transcription of core clock genes and clock-controlled genes (involved in key metabolic processes), harboring E-box elements (5'-CACGTG-3') within their promoters. The core clock genes: PER1/2/3 and CRY1/2 which are transcriptional repressors form the negative limb of the feedback loop and interact with the CLOCK|NPAS2-BMAL1|BMAL2 heterodimer inhibiting its activity and thereby negatively regulating their own expression. This heterodimer also activates nuclear receptors NR1D1/2 and RORA/B/G, which form a second feedback loop and which activate and repress BMAL1 transcription, respectively. The preferred binding motif for the CLOCK-BMAL1 heterodimer is 5'-CACGTGA-3', which contains a flanking adenine nucleotide at the 3-prime end of the canonical 6-nucleotide E-box sequence. CLOCK specifically binds to the half-site 5'-CAC-3', while BMAL1 binds to the half-site 5'-GTGA-3'. The protein is Basic helix-loop-helix ARNT-like protein 2 (BMAL2) of Gallus gallus (Chicken).